A 649-amino-acid polypeptide reads, in one-letter code: Arylsulfatase (649 aa).

A signal peptide spans 1–22 (MLQRLVVALCLLGFAALTAAAA). Residues Asp-34 and Asp-35 each coordinate Ca(2+). The N-linked (GlcNAc...) asparagine glycan is linked to Asn-41. Residue Cys-72 coordinates Ca(2+). Cys-72 serves as the catalytic Nucleophile. Cys-72 bears the 3-oxoalanine (Cys) mark. N-linked (GlcNAc...) asparagine glycosylation is found at Asn-89, Asn-224, and Asn-279. Residues Asp-324 and Asn-325 each contribute to the Ca(2+) site. N-linked (GlcNAc...) asparagine glycans are attached at residues Asn-445, Asn-489, and Asn-531.

The protein belongs to the sulfatase family. It depends on Ca(2+) as a cofactor. In terms of processing, the conversion to 3-oxoalanine (also known as C-formylglycine, FGly), of a serine or cysteine residue in prokaryotes and of a cysteine residue in eukaryotes, is critical for catalytic activity.

It localises to the periplasm. The enzyme catalyses an aryl sulfate + H2O = a phenol + sulfate + H(+). Its activity is regulated as follows. Inhibited by Na(3)BO(3) and KCN. No inhibition by sodium dodecyl sulfate, even at high concentration. In terms of biological role, is commonly produced by soil microorganisms and plays an important role in the mineralization of sulfates. The polypeptide is Arylsulfatase (Volvox carteri (Green alga)).